A 247-amino-acid chain; its full sequence is 2,3-bisphosphoglycerate-dependent phosphoglycerate mutase (247 aa).

Substrate contacts are provided by residues 8-15, 21-22, arginine 60, 87-90, lysine 98, 114-115, and 183-184; these read RHGESQWN, TG, ERHY, RR, and GN. Histidine 9 acts as the Tele-phosphohistidine intermediate in catalysis. The active-site Proton donor/acceptor is the glutamate 87.

Belongs to the phosphoglycerate mutase family. BPG-dependent PGAM subfamily.

It catalyses the reaction (2R)-2-phosphoglycerate = (2R)-3-phosphoglycerate. The protein operates within carbohydrate degradation; glycolysis; pyruvate from D-glyceraldehyde 3-phosphate: step 3/5. Catalyzes the interconversion of 2-phosphoglycerate and 3-phosphoglycerate. This chain is 2,3-bisphosphoglycerate-dependent phosphoglycerate mutase, found in Chlorobaculum parvum (strain DSM 263 / NCIMB 8327) (Chlorobium vibrioforme subsp. thiosulfatophilum).